The sequence spans 239 residues: Ribonuclease PH (239 aa).

Phosphate contacts are provided by residues arginine 86 and 124-126 (GTR).

The protein belongs to the RNase PH family. As to quaternary structure, homohexameric ring arranged as a trimer of dimers.

The enzyme catalyses tRNA(n+1) + phosphate = tRNA(n) + a ribonucleoside 5'-diphosphate. Functionally, phosphorolytic 3'-5' exoribonuclease that plays an important role in tRNA 3'-end maturation. Removes nucleotide residues following the 3'-CCA terminus of tRNAs; can also add nucleotides to the ends of RNA molecules by using nucleoside diphosphates as substrates, but this may not be physiologically important. Probably plays a role in initiation of 16S rRNA degradation (leading to ribosome degradation) during starvation. In Marinomonas sp. (strain MWYL1), this protein is Ribonuclease PH.